The sequence spans 896 residues: NET1-associated nuclear protein 1 (896 aa).

WD repeat units follow at residues 295-334 (WHID…QQFL), 490-542 (LQDP…TNWN), 552-595 (GISV…SNWC), and 605-645 (NHFS…ESLE).

As to quaternary structure, interacts with snoRNA U3. Interacts with MPP10. Component of the ribosomal small subunit (SSU) processome composed of at least 40 protein subunits and snoRNA U3. In the absence of snoRNA3, forms a complex with other t-UTPs. This complex can associate with pre-18S ribosomal RNAs.

The protein resides in the nucleus. Its subcellular location is the nucleolus. Involved in nucleolar processing of pre-18S ribosomal RNA. Required for optimal pre-ribosomal RNA transcription by RNA polymerase I together with a subset of U3 proteins required for transcription (t-UTPs). The protein is NET1-associated nuclear protein 1 (NAN1) of Saccharomyces cerevisiae (strain ATCC 204508 / S288c) (Baker's yeast).